Reading from the N-terminus, the 59-residue chain is MKKISFLLLLAIVICSIGWTDGQFTDVRCSASSKCWPVCKKLFGTYKGKCKNSKCRCYS.

The first 22 residues, 1 to 22, serve as a signal peptide directing secretion; sequence MKKISFLLLLAIVICSIGWTDG. Glutamine 23 is subject to Pyrrolidone carboxylic acid. 3 cysteine pairs are disulfide-bonded: cysteine 29–cysteine 50, cysteine 35–cysteine 55, and cysteine 39–cysteine 57.

Belongs to the short scorpion toxin superfamily. Potassium channel inhibitor family. Alpha-KTx 01 subfamily. As to expression, expressed by the venom gland.

It is found in the secreted. Potent blocker of both large-conductance calcium-activated potassium channels (KCa1.1/KCNMA1) and voltage-gated potassium channels (Kv1.3/KCNA3 and ERG1/Kv11.1/KCNH2). The chain is Potassium channel toxin alpha-KTx 1.14 from Olivierus martensii (Manchurian scorpion).